Consider the following 353-residue polypeptide: Quinolinate synthase (353 aa).

Histidine 49 and serine 70 together coordinate iminosuccinate. Position 115 (cysteine 115) interacts with [4Fe-4S] cluster. Residues 141-143 (YAN) and serine 158 contribute to the iminosuccinate site. Cysteine 202 is a [4Fe-4S] cluster binding site. Iminosuccinate contacts are provided by residues 228-230 (HPE) and threonine 245. Cysteine 299 is a binding site for [4Fe-4S] cluster.

The protein belongs to the quinolinate synthase family. Type 1 subfamily. [4Fe-4S] cluster is required as a cofactor.

Its subcellular location is the cytoplasm. The catalysed reaction is iminosuccinate + dihydroxyacetone phosphate = quinolinate + phosphate + 2 H2O + H(+). It participates in cofactor biosynthesis; NAD(+) biosynthesis; quinolinate from iminoaspartate: step 1/1. Functionally, catalyzes the condensation of iminoaspartate with dihydroxyacetone phosphate to form quinolinate. This chain is Quinolinate synthase, found in Hahella chejuensis (strain KCTC 2396).